The primary structure comprises 341 residues: Ribosomal RNA small subunit methyltransferase H (341 aa).

S-adenosyl-L-methionine is bound by residues Gly47–Tyr49, Asp64, Phe97, Asp109, and Gln116.

It belongs to the methyltransferase superfamily. RsmH family.

Its subcellular location is the cytoplasm. It carries out the reaction cytidine(1402) in 16S rRNA + S-adenosyl-L-methionine = N(4)-methylcytidine(1402) in 16S rRNA + S-adenosyl-L-homocysteine + H(+). Functionally, specifically methylates the N4 position of cytidine in position 1402 (C1402) of 16S rRNA. The protein is Ribosomal RNA small subunit methyltransferase H of Allorhizobium ampelinum (strain ATCC BAA-846 / DSM 112012 / S4) (Agrobacterium vitis (strain S4)).